The following is a 144-amino-acid chain: Large ribosomal subunit protein uL16 (144 aa).

A compositionally biased stretch (basic residues) spans 1-16; it reads MLTPKRVKHRKQHRGK. Residues 1-22 form a disordered region; it reads MLTPKRVKHRKQHRGKMAGNAK.

The protein belongs to the universal ribosomal protein uL16 family. As to quaternary structure, part of the 50S ribosomal subunit.

Functionally, binds 23S rRNA and is also seen to make contacts with the A and possibly P site tRNAs. The sequence is that of Large ribosomal subunit protein uL16 from Brevibacillus brevis (strain 47 / JCM 6285 / NBRC 100599).